The chain runs to 312 residues: Malate dehydrogenase (312 aa).

NAD(+)-binding positions include 7-13 (GAAGGIG) and D34. Substrate is bound by residues R81 and R87. Residues N94 and 117–119 (ITN) each bind NAD(+). Substrate-binding residues include N119 and R153. H177 (proton acceptor) is an active-site residue. M227 lines the NAD(+) pocket.

This sequence belongs to the LDH/MDH superfamily. MDH type 1 family. As to quaternary structure, homodimer.

It carries out the reaction (S)-malate + NAD(+) = oxaloacetate + NADH + H(+). Catalyzes the reversible oxidation of malate to oxaloacetate. The polypeptide is Malate dehydrogenase (Escherichia coli O6:K15:H31 (strain 536 / UPEC)).